A 329-amino-acid chain; its full sequence is GTP 3',8-cyclase (329 aa).

The 227-residue stretch at 8–234 folds into the Radical SAM core domain; it reads AFARKFYYLR…QLRSRADGPA (227 aa). Arg17 is a GTP binding site. Positions 24 and 28 each coordinate [4Fe-4S] cluster. Tyr30 contributes to the S-adenosyl-L-methionine binding site. Cys31 provides a ligand contact to [4Fe-4S] cluster. Arg68 serves as a coordination point for GTP. An S-adenosyl-L-methionine-binding site is contributed by Gly72. A GTP-binding site is contributed by Thr99. An S-adenosyl-L-methionine-binding site is contributed by Ser123. Residue Lys160 coordinates GTP. Met194 contributes to the S-adenosyl-L-methionine binding site. [4Fe-4S] cluster is bound by residues Cys257 and Cys260. 262–264 contributes to the GTP binding site; sequence RLR. Cys274 is a [4Fe-4S] cluster binding site.

It belongs to the radical SAM superfamily. MoaA family. Monomer and homodimer. It depends on [4Fe-4S] cluster as a cofactor.

It carries out the reaction GTP + AH2 + S-adenosyl-L-methionine = (8S)-3',8-cyclo-7,8-dihydroguanosine 5'-triphosphate + 5'-deoxyadenosine + L-methionine + A + H(+). It functions in the pathway cofactor biosynthesis; molybdopterin biosynthesis. Functionally, catalyzes the cyclization of GTP to (8S)-3',8-cyclo-7,8-dihydroguanosine 5'-triphosphate. The sequence is that of GTP 3',8-cyclase from Cronobacter sakazakii (strain ATCC BAA-894) (Enterobacter sakazakii).